Here is a 340-residue protein sequence, read N- to C-terminus: Uroporphyrinogen decarboxylase (340 aa).

Substrate-binding positions include 21–25 (RQAGR), aspartate 71, tyrosine 148, serine 203, and histidine 316.

This sequence belongs to the uroporphyrinogen decarboxylase family. As to quaternary structure, homodimer.

It localises to the cytoplasm. The catalysed reaction is uroporphyrinogen III + 4 H(+) = coproporphyrinogen III + 4 CO2. The protein operates within porphyrin-containing compound metabolism; protoporphyrin-IX biosynthesis; coproporphyrinogen-III from 5-aminolevulinate: step 4/4. In terms of biological role, catalyzes the decarboxylation of four acetate groups of uroporphyrinogen-III to yield coproporphyrinogen-III. This chain is Uroporphyrinogen decarboxylase, found in Campylobacter lari (strain RM2100 / D67 / ATCC BAA-1060).